The following is a 245-amino-acid chain: Leucyl/phenylalanyl-tRNA--protein transferase (245 aa).

This sequence belongs to the L/F-transferase family.

The protein localises to the cytoplasm. The catalysed reaction is N-terminal L-lysyl-[protein] + L-leucyl-tRNA(Leu) = N-terminal L-leucyl-L-lysyl-[protein] + tRNA(Leu) + H(+). It carries out the reaction N-terminal L-arginyl-[protein] + L-leucyl-tRNA(Leu) = N-terminal L-leucyl-L-arginyl-[protein] + tRNA(Leu) + H(+). The enzyme catalyses L-phenylalanyl-tRNA(Phe) + an N-terminal L-alpha-aminoacyl-[protein] = an N-terminal L-phenylalanyl-L-alpha-aminoacyl-[protein] + tRNA(Phe). Its function is as follows. Functions in the N-end rule pathway of protein degradation where it conjugates Leu, Phe and, less efficiently, Met from aminoacyl-tRNAs to the N-termini of proteins containing an N-terminal arginine or lysine. The chain is Leucyl/phenylalanyl-tRNA--protein transferase from Paraburkholderia phytofirmans (strain DSM 17436 / LMG 22146 / PsJN) (Burkholderia phytofirmans).